The primary structure comprises 432 residues: MYPGSGRYTYNNAGGNNGYQRPMAPPPNQQYGQQYGQQYEQQYGQQYGQQNDQQFSQQYAPPPGPPPMAYNRPVYPPPQFQQEQAKAQLSNGYNNPNVNASNMYGPPQNMSLPPPQTQTIQGTDQPYQYSQCTGRRKALIIGINYIGSKNQLRGCINDAHNIFNFLTNGYGYSSDDIVILTDDQNDLVRVPTRANMIRAMQWLVKDAQPNDSLFLHYSGHGGQTEDLDGDEEDGMDDVIYPVDFETQGPIIDDEMHDIMVKPLQQGVRLTALFDSCHSGTVLDLPYTYSTKGIIKEPNIWKDVGQDGLQAAISYATGNRAALIGSLGSIFKTVKGGMGNNVDRERVRQIKFSAADVVMLSGSKDNQTSADAVEDGQNTGAMSHAFIKVMTLQPQQSYLSLLQNMRKELAGKYSQKPQLSSSHPIDVNLQFIM.

Composition is skewed to low complexity over residues 1 to 14 (MYPGSGRYTYNNAG) and 29 to 59 (QQYGQQYGQQYEQQYGQQYGQQNDQQFSQQY). A disordered region spans residues 1–70 (MYPGSGRYTY…PPPGPPPMAY (70 aa)). The segment covering 60-70 (APPPGPPPMAY) has biased composition (pro residues). Catalysis depends on residues His-220 and Cys-276.

Belongs to the peptidase C14B family.

The protein localises to the cytoplasm. The protein resides in the nucleus. Its function is as follows. Mediates cell death (apoptosis) triggered by oxygen stress, salt stress or chronological aging. Regulated cell death can prevent a release of toxic cellular components, thus avoiding necrotic collapse of the colony, and can also provide nutrients for healthy cells. Therefore, regulated cell death in yeast colonies can be as important for their development as are apoptosis and related processes that occur within metazoa. This chain is Metacaspase-1 (MCA1), found in Saccharomyces cerevisiae (strain YJM789) (Baker's yeast).